The primary structure comprises 602 residues: Proteasome-associated ATPase (602 aa).

Positions 1 to 13 (MQHDLPGGRHDEA) are enriched in basic and acidic residues. The segment at 1-33 (MQHDLPGGRHDEADSSETGGAGTTENPSSEQAR) is disordered. Residues 23–32 (TTENPSSEQA) show a composition bias toward polar residues. Residues 28-103 (SSEQARQIRF…LREEVDRLAQ (76 aa)) adopt a coiled-coil conformation. 291–296 (GCGKTL) contacts ATP. The segment at 601 to 602 (YL) is docks into pockets in the proteasome alpha-ring.

It belongs to the AAA ATPase family. Homohexamer. Assembles into a hexameric ring structure that caps the 20S proteasome core. Strongly interacts with the prokaryotic ubiquitin-like protein Pup through a hydrophobic interface; the interacting region of ARC lies in its N-terminal coiled-coil domain. There is one Pup binding site per ARC hexamer ring. Upon ATP-binding, the C-terminus of ARC interacts with the alpha-rings of the proteasome core, possibly by binding to the intersubunit pockets.

It participates in protein degradation; proteasomal Pup-dependent pathway. Functionally, ATPase which is responsible for recognizing, binding, unfolding and translocation of pupylated proteins into the bacterial 20S proteasome core particle. May be essential for opening the gate of the 20S proteasome via an interaction with its C-terminus, thereby allowing substrate entry and access to the site of proteolysis. Thus, the C-termini of the proteasomal ATPase may function like a 'key in a lock' to induce gate opening and therefore regulate proteolysis. The chain is Proteasome-associated ATPase from Saccharomonospora viridis (strain ATCC 15386 / DSM 43017 / JCM 3036 / CCUG 5913 / NBRC 12207 / NCIMB 9602 / P101) (Thermoactinomyces viridis).